Consider the following 85-residue polypeptide: DNA-directed RNA polymerase subunit beta'' (85 aa).

This sequence belongs to the RNA polymerase beta' chain family. RpoC2 subfamily. In terms of assembly, in plastids the minimal PEP RNA polymerase catalytic core is composed of four subunits: alpha, beta, beta', and beta''. When a (nuclear-encoded) sigma factor is associated with the core the holoenzyme is formed, which can initiate transcription.

Its subcellular location is the plastid. The protein localises to the chloroplast. It catalyses the reaction RNA(n) + a ribonucleoside 5'-triphosphate = RNA(n+1) + diphosphate. In terms of biological role, DNA-dependent RNA polymerase catalyzes the transcription of DNA into RNA using the four ribonucleoside triphosphates as substrates. In Galdieria sulphuraria (Red alga), this protein is DNA-directed RNA polymerase subunit beta'' (rpoC2).